The following is a 1185-amino-acid chain: Adhesion G-protein coupled receptor G6 (1185 aa).

The first 32 residues, 1-32 (MISFISGRWWRWKFQNTLAVFLLLICLSTSVA), serve as a signal peptide directing secretion. The Extracellular segment spans residues 33 to 849 (QSCQSSTSCN…AELIDEKNNR (817 aa)). A disulfide bond links Cys-41 and Cys-67. One can recognise a CUB domain in the interval 41-149 (CNVVLTDSQG…KGFHISYKQV (109 aa)). The interval 41 to 354 (CNVVLTDSQG…SSTQTDSTLS (314 aa)) is mediates interaction with type IV collagen. An inhibits receptor signaling in absence of type IV collagen region spans residues 41–839 (CNVVLTDSQG…FGILMDVSRA (799 aa)). A glycan (N-linked (GlcNAc...) asparagine) is linked at Asn-68. The Ca(2+) site is built by Glu-89 and Asp-97. Cys-94 and Cys-111 are joined by a disulfide. A glycan (N-linked (GlcNAc...) asparagine) is linked at Asn-121. Residues Asp-134, Ser-136, and Val-137 each contribute to the Ca(2+) site. The region spanning 154–355 (RNQKVTMPKS…STQTDSTLSC (202 aa)) is the Pentraxin (PTX) domain. 3 disulfide bridges follow: Cys-185–Cys-248, Cys-229–Cys-271, and Cys-369–Cys-375. Residues Asn-395, Asn-429, Asn-470, Asn-539, Asn-550, Asn-562, Asn-565, Asn-613, Asn-680, Asn-691, Asn-719, Asn-763, Asn-799, and Asn-818 are each glycosylated (N-linked (GlcNAc...) asparagine). Disulfide bonds link Cys-508–Cys-544 and Cys-532–Cys-563. The 183-residue stretch at 658 to 840 (PSLTISSKNL…GILMDVSRAA (183 aa)) folds into the GAIN-B domain. 2 disulfides stabilise this stretch: Cys-790–Cys-822 and Cys-809–Cys-824. The segment at 790–840 (CVFWDFNLQNYSGGCNSDGCKVGSDSNSNRTVCLCNHLTHFGILMDVSRAA) is GPS. The stachel stretch occupies residues 829–837 (HFGILMDVS). The chain crosses the membrane as a helical span at residues 850-870 (VLTFITYIGCGISAIFSAATL). Topologically, residues 871-886 (LTYIAFEKLRRDYPSK) are cytoplasmic. The helical transmembrane segment at 887–907 (ILMNLSTSLLFLNMVFLLDGW) threads the bilayer. Residues 908-915 (LASYEIKE) lie on the Extracellular side of the membrane. A helical transmembrane segment spans residues 916–936 (LCVTVAVFLHFFLLTSFTWMG). Topologically, residues 937–957 (LESIHMYIALVKVFNTYIRRY) are cytoplasmic. A helical transmembrane segment spans residues 958 to 978 (ILKFCIVGWGVPAAIVGIVLA). Residues 979–1013 (VSKDSYGKNYYGKGKDGQGTSEFCWILNPVVFYVT) lie on the Extracellular side of the membrane. The chain crosses the membrane as a helical span at residues 1014 to 1034 (CVAYFSIIFLMNVAMFIVVMI). Residues 1035–1057 (QICGRNGKRSNRTLREDILRNLR) lie on the Cytoplasmic side of the membrane. A helical membrane pass occupies residues 1058–1080 (SVVSLTFLLGMTWGFAFFAWGPV). Topologically, residues 1081 to 1083 (SLA) are extracellular. A helical membrane pass occupies residues 1084-1106 (FMYLFTIFNSLQGLFIFVFHCAL). A 17alpha-hydroxyprogesterone-binding site is contributed by Asn-1092. The Cytoplasmic portion of the chain corresponds to 1107-1185 (KENVQKQWRR…RHSNADSTLQ (79 aa)). Positions 1138–1160 (NTKKVSSDNLGKSLSSSSFGSTT) are disordered. Positions 1144 to 1158 (SDNLGKSLSSSSFGS) are enriched in low complexity.

It belongs to the G-protein coupled receptor 2 family. Adhesion G-protein coupled receptor (ADGR) subfamily. Post-translationally, autoproteolytically processed at the GPS region of the GAIN-B domain; this cleavage modulates receptor activity. As to expression, expressed in Schwann cells of the posterior lateral line nerve and in brain.

It localises to the cell membrane. With respect to regulation, forms a heterodimer of 2 chains generated by proteolytic processing that remain associated through non-covalent interactions mediated by the GAIN-B domain. In the inactivated receptor, the Stachel sequence (also named stalk) is embedded in the GAIN-B domain, where it adopts a beta-strand conformation. On activation, the Stachel moves into the 7 transmembrane region and adopts a twisted hook-shaped configuration that forms contacts within the receptor, leading to coupling of a G-alpha protein, which activates signaling. The cleaved GAIN-B and N-terminal domains can then dissociate from the rest of the receptor. In terms of biological role, adhesion G-protein coupled receptor (aGPCR) for steroid hormones, such as progesterone and 17alpha-hydroxyprogesterone (17OHP). Ligand binding causes a conformation change that triggers signaling via guanine nucleotide-binding proteins (G proteins) and modulates the activity of downstream effectors, such as adenylate cyclase. Adgrg6 is coupled to G(i) G alpha proteins and mediates inhibition of adenylate cyclase. Also able to couple to G(q) G proteins. Involved in myelination of the peripheral nervous system: required for differentiation of promyelinating Schwann cells and for normal myelination of axons. G-protein coupled receptor activity can also be activated by type IV collagen, a major constituent of the basement membrane. Also plays a role inner ear development. The protein is Adhesion G-protein coupled receptor G6 (adgrg6) of Danio rerio (Zebrafish).